We begin with the raw amino-acid sequence, 132 residues long: Tail assembly protein Gp24 (132 aa).

It belongs to the L5likevirus tail assembly protein family. As to quaternary structure, interacts with tail assembly protein Gp25 and tape measure protein.

Its function is as follows. Promotes tail assembly by creating a scaffold for the tail tube proteins. The tail assembly proteins Gp24 and Gp25 would wrap the linear tape measure protein to create a tail assembly scaffold. It would allow polymerization of tail tube protein during which Gp24 and Gp25 are released and therefore are absent from the mature virion. The tail assembly protein Gp25 is produced by a rare -1 ribosomal frameshift. The ratio Gp24/Gp25 is important for proper tail assembly. The polypeptide is Tail assembly protein Gp24 (24) (Mycobacterium (Mycobacteriophage L5)).